Here is a 586-residue protein sequence, read N- to C-terminus: Estrogen receptor (586 aa).

The tract at residues M1–Y179 is modulating. The interval F144–S173 is disordered. Positions S149–M160 are enriched in basic and acidic residues. 2 consecutive NR C4-type zinc fingers follow at residues C180–C200 and C216–C240. A DNA-binding region (nuclear receptor) is located at residues C180–M245. Residues M246–L302 are hinge. Over residues K252 to R264 the composition is skewed to basic residues. Residues K252–D276 form a disordered region. The span at Q265–D276 shows a compositional bias: basic and acidic residues. Residues T303–H539 form the NR LBD domain. A compositionally biased stretch (basic and acidic residues) spans T543–R556. The tract at residues T543–C569 is disordered.

It belongs to the nuclear hormone receptor family. NR3 subfamily. As to quaternary structure, binds DNA as a homodimer. Can form a heterodimer with ER-beta.

Its subcellular location is the nucleus. In terms of biological role, the steroid hormones and their receptors are involved in the regulation of eukaryotic gene expression and affect cellular proliferation and differentiation in target tissues. The chain is Estrogen receptor (esr1) from Xenopus laevis (African clawed frog).